The chain runs to 418 residues: Phosphopentomutase (418 aa).

The Mn(2+) site is built by D10, D297, H302, D338, H339, and H350.

This sequence belongs to the phosphopentomutase family. Mn(2+) serves as cofactor.

It is found in the cytoplasm. The enzyme catalyses 2-deoxy-alpha-D-ribose 1-phosphate = 2-deoxy-D-ribose 5-phosphate. The catalysed reaction is alpha-D-ribose 1-phosphate = D-ribose 5-phosphate. The protein operates within carbohydrate degradation; 2-deoxy-D-ribose 1-phosphate degradation; D-glyceraldehyde 3-phosphate and acetaldehyde from 2-deoxy-alpha-D-ribose 1-phosphate: step 1/2. Its function is as follows. Isomerase that catalyzes the conversion of deoxy-ribose 1-phosphate (dRib-1-P) and ribose 1-phosphate (Rib-1-P) to deoxy-ribose 5-phosphate (dRib-5-P) and ribose 5-phosphate (Rib-5-P), respectively. This is Phosphopentomutase from Chromohalobacter salexigens (strain ATCC BAA-138 / DSM 3043 / CIP 106854 / NCIMB 13768 / 1H11).